A 282-amino-acid polypeptide reads, in one-letter code: Heme oxygenase 1, chloroplastic (282 aa).

The N-terminal 56 residues, 1–56, are a transit peptide targeting the chloroplast; the sequence is MASATVVSQIQSLYIIKPRLSPPPPPHRQFRSIYFPTTRLLQQHRFRQMKSVVIVP. H86 provides a ligand contact to heme b.

It belongs to the heme oxygenase family. As to expression, highly expressed in root nodules and, to a lower extent, in leaves, shoots, roots, flowers and pods (at protein level).

Its subcellular location is the plastid. The protein localises to the chloroplast. The catalysed reaction is heme b + 3 reduced [NADPH--hemoprotein reductase] + 3 O2 = biliverdin IXalpha + CO + Fe(2+) + 3 oxidized [NADPH--hemoprotein reductase] + 3 H2O + H(+). Its function is as follows. Key enzyme in the synthesis of the chromophore of the phytochrome family of plant photoreceptors. Catalyzes the opening of the heme ring to form the open-chain tetrapyrrole biliverdin IX with the release of iron and carbon monoxide (CO). Produces specifically the biliverdin IX-alpha isomer. Can form complex with heme, is ferredoxin-dependent and its activity is increased in the presence of ascorbate. May affect the plastid-to-nucleus signaling pathway by perturbing tetrapyrrole synthesis. The plastid-to-nucleus signal plays an important role in the coordinated expression of both nuclear- and chloroplast-localized genes that encode photosynthesis-related proteins. Required for efficient symbiotic nitrogen fixation (SNF) in root nodules. Responsible for heme catabolism in uninfected nodule interstitial cells (UC), preventing superoxide production under stressful conditions (e.g. nitrate exposure and darkness) and catalyzing biliverdin (BV) production in senescing green nodules. In Lotus japonicus (Lotus corniculatus var. japonicus), this protein is Heme oxygenase 1, chloroplastic.